Reading from the N-terminus, the 170-residue chain is Adenine phosphoribosyltransferase (170 aa).

Belongs to the purine/pyrimidine phosphoribosyltransferase family. Homodimer.

The protein localises to the cytoplasm. It carries out the reaction AMP + diphosphate = 5-phospho-alpha-D-ribose 1-diphosphate + adenine. It functions in the pathway purine metabolism; AMP biosynthesis via salvage pathway; AMP from adenine: step 1/1. Functionally, catalyzes a salvage reaction resulting in the formation of AMP, that is energically less costly than de novo synthesis. The chain is Adenine phosphoribosyltransferase from Bacillus velezensis (strain DSM 23117 / BGSC 10A6 / LMG 26770 / FZB42) (Bacillus amyloliquefaciens subsp. plantarum).